The sequence spans 407 residues: Endo-1,4-beta-xylanase D (407 aa).

The first 19 residues, 1 to 19 (MTLVKSILLALAAGHVAQA), serve as a signal peptide directing secretion. The GH10 domain maps to 20–333 (QLNTAAKAAG…KPAYYGILAG (314 aa)). N-linked (GlcNAc...) asparagine glycosylation occurs at Asn-118. The Proton donor role is filled by Glu-148. The active-site Nucleophile is the Glu-255. A disulfide bridge links Cys-283 with Cys-289. The interval 337–364 (GSGSSSSTSSTTLITTTTPTASSSTTSA) is disordered. One can recognise a CBM1 domain in the interval 371-407 (SGAAHWGQCGGIGWSGPTICVSPYTCQVLNPYYSQCL).

The protein belongs to the glycosyl hydrolase 10 (cellulase F) family.

It is found in the secreted. It catalyses the reaction Endohydrolysis of (1-&gt;4)-beta-D-xylosidic linkages in xylans.. It participates in glycan degradation; xylan degradation. Inhibited by wheat xylanase inhibiting protein I (XIP-I). In terms of biological role, endo-1,4-beta-xylanase involved in the hydrolysis of xylan, a major structural heterogeneous polysaccharide found in plant biomass representing the second most abundant polysaccharide in the biosphere, after cellulose. Shows an endo-mode of action on xylan forming mainly xylobiose and short-chain xylooligosaccharides (XOS). The chain is Endo-1,4-beta-xylanase D (xynD) from Talaromyces funiculosus (Fruitlet core rot fungus).